The chain runs to 347 residues: Haptoglobin (347 aa).

Residues 1 to 18 form the signal peptide; sequence MRALGAVVTLLLWGQLFA. A Sushi domain is found at 31–88; sequence DSCPKPPEIANGYVEHLVRYRCRQFYRLRTEGDGVYTLNDEKQWVNTAAGEKLPECEA. 4 disulfides stabilise this stretch: cysteine 52–cysteine 86, cysteine 90–cysteine 207, cysteine 250–cysteine 281, and cysteine 292–cysteine 322. The Peptidase S1 domain occupies 103–345; the sequence is IIGGSMDAKG…LKDWVQETMA (243 aa). N-linked (GlcNAc...) asparagine glycans are attached at residues asparagine 148, asparagine 182, asparagine 256, and asparagine 264. The interval 259 to 264 is interaction with CD163; that stretch reads VPEKKN.

This sequence belongs to the peptidase S1 family. As to quaternary structure, tetramer of two alpha and two beta chains; disulfide-linked. The hemoglobin/haptoglobin complex is composed of a haptoglobin dimer bound to two hemoglobin alpha-beta dimers. Interacts with CD163. Interacts with ERGIC3. In terms of tissue distribution, expressed by the liver and secreted in plasma.

It is found in the secreted. As a result of hemolysis, hemoglobin is found to accumulate in the kidney and is secreted in the urine. Haptoglobin captures, and combines with free plasma hemoglobin to allow hepatic recycling of heme iron and to prevent kidney damage. Haptoglobin also acts as an antioxidant, has antibacterial activity and plays a role in modulating many aspects of the acute phase response. Hemoglobin/haptoglobin complexes are rapidly cleared by the macrophage CD163 scavenger receptor expressed on the surface of liver Kupfer cells through an endocytic lysosomal degradation pathway. The chain is Haptoglobin (Hp) from Mus saxicola (Brown spiny mouse).